Here is a 291-residue protein sequence, read N- to C-terminus: MPTLKDIRVRIKGIKSTQQVTKAMKMVAAAKLRRAQERAIMARPYAGKLKEMLGSLSAKVDTSLNPLLSSRQDVKKVLVILIAADRGLCGAFNTNIIKLAQKVVTEDYAAQYKNGGVSMICAGSRGFDFFRKRGFSIVKGYPSVFQNLDFSVAKEIAETASGMYLRGEADKVIVVYNEFKSVLAPVLKAEDLLPIAAENAGKDNSGDYIYEPSPAVIIDELVPKHLSTQVWRMMLESNAAEQAARMTAMDSATENAKELLRTLNISYNRARQAAITKELSEIVAGADALKN.

The protein belongs to the ATPase gamma chain family. F-type ATPases have 2 components, CF(1) - the catalytic core - and CF(0) - the membrane proton channel. CF(1) has five subunits: alpha(3), beta(3), gamma(1), delta(1), epsilon(1). CF(0) has three main subunits: a, b and c.

It is found in the cell inner membrane. Produces ATP from ADP in the presence of a proton gradient across the membrane. The gamma chain is believed to be important in regulating ATPase activity and the flow of protons through the CF(0) complex. The protein is ATP synthase gamma chain of Chlorobium limicola (strain DSM 245 / NBRC 103803 / 6330).